Consider the following 372-residue polypeptide: MTEQEICVRVTRAAAKRKASTAMGIDGDRVNKKRVVLGELLNVSNVNLLANLNQKKETQKPKRNLKPPPAKQIKSAPVAIIDLESKSDIDSRSDDPQMCGPYVADIYEYLRQLEVKPKQRPLPDYIEKVQKDVTPSMRGVLVDWLVEVAEEYKLGSETLYLTVSHIDRFLSLKTVNKQKLQLVGVSAMLIASKYEEISPPKVDDFCYITDNTFSKQDVVKMEADILLALQFELGRPTINTFMRRFTRVAQDDFKVPHLQLEPLCCYLSELSILDYKTVKFVPSLLAASAVFLARFIIRPKQHPWNQMLEEYTKYKAADLQVCVGIIHDLYLSRRGGALQAVREKYKHHKFQCVATMPVSPELPVTFWEDVTI.

Residues 53 to 73 form a disordered region; the sequence is NQKKETQKPKRNLKPPPAKQI.

The protein belongs to the cyclin family. Cyclin AB subfamily.

This is Cyclin-A3-2 (CYCA3-2) from Arabidopsis thaliana (Mouse-ear cress).